Here is a 673-residue protein sequence, read N- to C-terminus: DNA ligase (673 aa).

Residues 34 to 38 (DAEYD), 83 to 84 (SL), and E116 each bind NAD(+). Catalysis depends on K118, which acts as the N6-AMP-lysine intermediate. The NAD(+) site is built by R139, E176, K293, and K317. Zn(2+) contacts are provided by C411, C414, C429, and C435. The region spanning 595–673 (NQQNPFFGKT…EDEFLKWVNS (79 aa)) is the BRCT domain.

The protein belongs to the NAD-dependent DNA ligase family. LigA subfamily. Requires Mg(2+) as cofactor. Mn(2+) serves as cofactor.

The enzyme catalyses NAD(+) + (deoxyribonucleotide)n-3'-hydroxyl + 5'-phospho-(deoxyribonucleotide)m = (deoxyribonucleotide)n+m + AMP + beta-nicotinamide D-nucleotide.. In terms of biological role, DNA ligase that catalyzes the formation of phosphodiester linkages between 5'-phosphoryl and 3'-hydroxyl groups in double-stranded DNA using NAD as a coenzyme and as the energy source for the reaction. It is essential for DNA replication and repair of damaged DNA. In Legionella pneumophila (strain Corby), this protein is DNA ligase.